The chain runs to 123 residues: Small ribosomal subunit protein uS12cz/uS12cy (123 aa).

The protein belongs to the universal ribosomal protein uS12 family. Part of the 30S ribosomal subunit.

Its subcellular location is the plastid. It localises to the chloroplast. In terms of biological role, with S4 and S5 plays an important role in translational accuracy. Located at the interface of the 30S and 50S subunits. The chain is Small ribosomal subunit protein uS12cz/uS12cy (rps12-A) from Daucus carota (Wild carrot).